The chain runs to 423 residues: Large ribosomal subunit protein mL37 (423 aa).

The transit peptide at 1–29 directs the protein to the mitochondrion; it reads MALASGPAMRALAGSARLGLGGYGAPKRG.

Belongs to the mitochondrion-specific ribosomal protein mL37 family. Component of the mitochondrial ribosome large subunit (39S) which comprises a 16S rRNA and about 50 distinct proteins.

Its subcellular location is the mitochondrion. The protein is Large ribosomal subunit protein mL37 (Mrpl37) of Rattus norvegicus (Rat).